The following is a 547-amino-acid chain: Riboflavin transporter RibJ (547 aa).

The Cytoplasmic portion of the chain corresponds to 1–11; the sequence is MLPSFTRKPAD. Residues 12–32 form a helical membrane-spanning segment; sequence HPIGYLVALSGLLMQLMSYGI. Residues 33 to 58 are Extracellular-facing; it reads DNSYSIFSEDMHNDPSLGFPSITAIS. The helical transmembrane segment at 59–79 threads the bilayer; the sequence is LGNSVSLGLSPAFGVLAGFCV. Over 80 to 85 the chain is Cytoplasmic; the sequence is DRLPPR. Residues 86–106 traverse the membrane as a helical segment; sequence FMMALSTILLFTGLWISSTLA. The Extracellular segment spans residues 107–108; that stretch reads AN. Residues 109–129 traverse the membrane as a helical segment; sequence IYVVTFTYCLFASIGTACMLS. Over 130 to 144 the chain is Cytoplasmic; sequence PGAAATSSWFNRYQG. Residues 145-165 form a helical membrane-spanning segment; the sequence is LAMGINFAGGGIGSAIIPPLA. Topologically, residues 166–175 are extracellular; the sequence is GKWVVAYGWR. A helical membrane pass occupies residues 176–196; that stretch reads KAFQLMSIFCAIGVLATALSA. The Cytoplasmic portion of the chain corresponds to 197–344; that stretch reads RRREPKRDDS…MFTLPFMGNF (148 aa). The disordered stretch occupies residues 198–293; it reads RREPKRDDSS…EGLDVTEQSQ (96 aa). Basic and acidic residues predominate over residues 244–255; the sequence is NEGKEDVREMGR. A helical transmembrane segment spans residues 345-365; the sequence is LCWFIYSWAFYSLIYAAVPYI. Topologically, residues 366 to 386 are extracellular; that stretch reads SSMGKPGTVYAGVPPIPTDVA. The chain crosses the membrane as a helical span at residues 387–407; the sequence is ATLFTFYGVFQVVGSVLVGWL. Over 408–412 the chain is Cytoplasmic; sequence ASLVT. The chain crosses the membrane as a helical span at residues 413–433; sequence AEFAYVFCATVGGIGCGLLAL. The Extracellular portion of the chain corresponds to 434–437; that stretch reads GRSY. The helical transmembrane segment at 438-458 threads the bilayer; that stretch reads VAFALLLCIIGFCMAGMFAVM. The Cytoplasmic portion of the chain corresponds to 459 to 470; it reads PTLIATHLYGPN. Residues 471–491 form a helical membrane-spanning segment; sequence LGFYFGAVFLAGVVGGFVAPP. At 492–505 the chain is on the extracellular side; that stretch reads MQATIQLRNNGSYA. Residue Asn-501 is glycosylated (N-linked (GlcNAc...) asparagine). Residues 506 to 526 traverse the membrane as a helical segment; that stretch reads FVCVVMSVSMTLSALVCYATL. At 527 to 547 the chain is on the cytoplasmic side; it reads WRSKRSGIVLAARKTKLVEIM.

It belongs to the major facilitator superfamily. RibJ family.

It is found in the cell membrane. In terms of biological role, transporter involved in riboflavin (vitamin B2) uptake. Also transports FMN and FAD. The chain is Riboflavin transporter RibJ from Trypanosoma brucei brucei (strain 927/4 GUTat10.1).